The chain runs to 208 residues: Histone H1.3 (208 aa).

Ser2 is modified (N-acetylserine). One can recognise an H15 domain in the interval 37 to 113; it reads AHPPYINMVT…GASGRFRVTE (77 aa). Residues 113 to 208 form a disordered region; it reads EKKAAAAKKP…PAKKAVAPKT (96 aa). Composition is skewed to basic residues over residues 148–158 and 165–191; these read KAKKTTATKTK and KKVK…KSAP. A compositionally biased stretch (low complexity) spans 192-208; sequence KKAAAAKPAKKAVAPKT.

The protein belongs to the histone H1/H5 family.

The protein resides in the nucleus. Its subcellular location is the chromosome. In terms of biological role, histones H1 are necessary for the condensation of nucleosome chains into higher-order structures. This is Histone H1.3 (hil-3) from Caenorhabditis elegans.